We begin with the raw amino-acid sequence, 91 residues long: Protein xpaR7 (91 aa).

This Bacillus licheniformis protein is Protein xpaR7 (xpaR7).